We begin with the raw amino-acid sequence, 501 residues long: Type B diterpene cyclase (501 aa).

This sequence belongs to the terpene synthase family. In terms of assembly, monomer. Mg(2+) is required as a cofactor.

It catalyses the reaction geranylgeranyl diphosphate = tuberculosinyl diphosphate. Its activity is regulated as follows. Strongly inhibited by 15-aza-dihydrogeranylgeraniol and 5-isopropyl-N,N,N,2-tetramethyl-4-(piperidine-1-carbonyloxy)benzenaminium chloride (Amo-1618). Inhibited by GGPP concentrations higher than 50 uM. Functionally, catalyzes the formation of tuberculosinyl diphosphate from geranylgeranyl diphosphate (GGPP). It could also react with (14R/S)-14,15-oxidoGGPP to generate 3alpha- and 3beta-hydroxytuberculosinyl diphosphate. In Mycobacterium tuberculosis (strain ATCC 25618 / H37Rv), this protein is Type B diterpene cyclase.